A 435-amino-acid polypeptide reads, in one-letter code: Ribosomal protein uS12 methylthiotransferase RimO (435 aa).

The MTTase N-terminal domain maps to 3 to 113; sequence HKVGFVSLGC…VVNAVHQYLP (111 aa). Cys-12, Cys-48, Cys-77, Cys-144, Cys-148, and Cys-151 together coordinate [4Fe-4S] cluster. The Radical SAM core domain maps to 130 to 367; it reads LTPRHYAYLK…MQVQAEISRN (238 aa). The region spanning 370-435 is the TRAM domain; it reads KNKIGSTQTV…DDYDLYASLV (66 aa).

The protein belongs to the methylthiotransferase family. RimO subfamily. The cofactor is [4Fe-4S] cluster.

The protein localises to the cytoplasm. It catalyses the reaction L-aspartate(89)-[ribosomal protein uS12]-hydrogen + (sulfur carrier)-SH + AH2 + 2 S-adenosyl-L-methionine = 3-methylsulfanyl-L-aspartate(89)-[ribosomal protein uS12]-hydrogen + (sulfur carrier)-H + 5'-deoxyadenosine + L-methionine + A + S-adenosyl-L-homocysteine + 2 H(+). Its function is as follows. Catalyzes the methylthiolation of an aspartic acid residue of ribosomal protein uS12. The chain is Ribosomal protein uS12 methylthiotransferase RimO from Legionella pneumophila subsp. pneumophila (strain Philadelphia 1 / ATCC 33152 / DSM 7513).